The chain runs to 590 residues: Cell division protein FtsZ 1 (590 aa).

Residues 24–28, 111–113, E142, R146, and D190 each bind GTP; these read GGGGN and GTG. Disordered regions lie at residues 346-372 and 524-590; these read AAVP…QPLQ and EATN…RQSS. Residues 534–546 show a composition bias toward low complexity; it reads AAAPSAASQQRRP. A compositionally biased stretch (basic and acidic residues) spans 559 to 576; the sequence is GQLDDHGRAAPQMRSHED.

Belongs to the FtsZ family. As to quaternary structure, homodimer. Polymerizes to form a dynamic ring structure in a strictly GTP-dependent manner. Interacts directly with several other division proteins.

Its subcellular location is the cytoplasm. In terms of biological role, essential cell division protein that forms a contractile ring structure (Z ring) at the future cell division site. The regulation of the ring assembly controls the timing and the location of cell division. One of the functions of the FtsZ ring is to recruit other cell division proteins to the septum to produce a new cell wall between the dividing cells. Binds GTP and shows GTPase activity. This chain is Cell division protein FtsZ 1, found in Rhizobium meliloti (strain 1021) (Ensifer meliloti).